The following is a 298-amino-acid chain: Transcription factor RAX2 (298 aa).

HTH myb-type domains are found at residues 9–62 (KANV…LNYL) and 63–117 (RPNI…KKKL). 2 consecutive DNA-binding regions (H-T-H motif) follow at residues 38–62 (WIAL…LNYL) and 90–113 (WSVI…NTKL).

In terms of tissue distribution, ubiquitous, with higher levels in roots, flowers, and shoot tips. Found in all cells of the shoot tips.

The protein localises to the nucleus. Transcription activator. Positively regulates axillary meristems (AMs) formation and development, especially during inflorescence. This chain is Transcription factor RAX2 (RAX2), found in Arabidopsis thaliana (Mouse-ear cress).